Reading from the N-terminus, the 520-residue chain is Cholesterol side-chain cleavage enzyme, mitochondrial (520 aa).

Residues methionine 1–glycine 39 constitute a mitochondrion transit peptide. Positions tryptophan 27–tyrosine 48 are disordered. Cysteine 461 contributes to the heme binding site.

This sequence belongs to the cytochrome P450 family. As to quaternary structure, interacts with FDX1/adrenodoxin. Heme serves as cofactor.

The protein resides in the mitochondrion inner membrane. It catalyses the reaction 6 reduced [adrenodoxin] + cholesterol + 3 O2 + 6 H(+) = 4-methylpentanal + pregnenolone + 6 oxidized [adrenodoxin] + 4 H2O. The enzyme catalyses 2 reduced [adrenodoxin] + cholesterol + O2 + 2 H(+) = (22R)-hydroxycholesterol + 2 oxidized [adrenodoxin] + H2O. The catalysed reaction is (22R)-hydroxycholesterol + 2 reduced [adrenodoxin] + O2 + 2 H(+) = (20R,22R)-20,22-dihydroxycholesterol + 2 oxidized [adrenodoxin] + H2O. It carries out the reaction (20R,22R)-20,22-dihydroxycholesterol + 2 reduced [adrenodoxin] + O2 + 2 H(+) = 4-methylpentanal + pregnenolone + 2 oxidized [adrenodoxin] + 2 H2O. The protein operates within lipid metabolism; C21-steroid hormone metabolism. It participates in steroid metabolism; cholesterol metabolism. A cytochrome P450 monooxygenase that catalyzes the side-chain hydroxylation and cleavage of cholesterol to pregnenolone, the precursor of most steroid hormones. Catalyzes three sequential oxidation reactions of cholesterol, namely the hydroxylation at C22 followed with the hydroxylation at C20 to yield 20R,22R-hydroxycholesterol that is further cleaved between C20 and C22 to yield the C21-steroid pregnenolone and 4-methylpentanal. Mechanistically, uses molecular oxygen inserting one oxygen atom into a substrate and reducing the second into a water molecule. Two electrons are provided by NADPH via a two-protein mitochondrial transfer system comprising flavoprotein FDXR (adrenodoxin/ferredoxin reductase) and nonheme iron-sulfur protein FDX1 or FDX2 (adrenodoxin/ferredoxin). The polypeptide is Cholesterol side-chain cleavage enzyme, mitochondrial (Capra hircus (Goat)).